A 256-amino-acid polypeptide reads, in one-letter code: Global transcriptional regulator CodY (256 aa).

Positions 1 to 155 (MSLLSKTREL…AATVIGMEIL (155 aa)) are GAF domain. Positions 203-222 (ASKVADRVGITRSVIVNALR) form a DNA-binding region, H-T-H motif.

The protein belongs to the CodY family.

Its subcellular location is the cytoplasm. DNA-binding global transcriptional regulator which is involved in the adaptive response to starvation and acts by directly or indirectly controlling the expression of numerous genes in response to nutrient availability. During rapid exponential growth, CodY is highly active and represses genes whose products allow adaptation to nutrient depletion. The chain is Global transcriptional regulator CodY from Staphylococcus epidermidis (strain ATCC 35984 / DSM 28319 / BCRC 17069 / CCUG 31568 / BM 3577 / RP62A).